The following is a 332-amino-acid chain: L-lactate dehydrogenase A chain (332 aa).

A2 is modified (N-acetylalanine). The residue at position 5 (K5) is an N6-acetyllysine; alternate. K5 carries the N6-succinyllysine; alternate modification. The residue at position 14 (K14) is an N6-acetyllysine. 29 to 57 is a binding site for NAD(+); that stretch reads GAVGMACAISILMKDLADELALVDVMEDK. K57 is subject to N6-acetyllysine; alternate. A Glycyl lysine isopeptide (Lys-Gly) (interchain with G-Cter in SUMO2); alternate cross-link involves residue K57. The residue at position 81 (K81) is an N6-acetyllysine. R99 contacts NAD(+). R106 is a substrate binding site. K118 carries the N6-acetyllysine; alternate modification. Residue K118 is modified to N6-succinyllysine; alternate. K126 carries the N6-acetyllysine modification. Residue N138 coordinates NAD(+). Substrate contacts are provided by N138 and R169. The active-site Proton acceptor is the H193. N6-acetyllysine is present on residues K224 and K232. At Y239 the chain carries Phosphotyrosine. At K243 the chain carries N6-acetyllysine. T248 contacts substrate. At T309 the chain carries Phosphothreonine. K318 carries the post-translational modification N6-acetyllysine; alternate. Position 318 is an N6-succinyllysine; alternate (K318). Position 322 is a phosphothreonine (T322).

Belongs to the LDH/MDH superfamily. LDH family. As to quaternary structure, homotetramer. Interacts with PTEN upstream reading frame protein MP31. Post-translationally, ISGylated.

Its subcellular location is the cytoplasm. It catalyses the reaction (S)-lactate + NAD(+) = pyruvate + NADH + H(+). It participates in fermentation; pyruvate fermentation to lactate; (S)-lactate from pyruvate: step 1/1. Its function is as follows. Interconverts simultaneously and stereospecifically pyruvate and lactate with concomitant interconversion of NADH and NAD(+). This chain is L-lactate dehydrogenase A chain (Ldha), found in Mus musculus (Mouse).